Here is a 359-residue protein sequence, read N- to C-terminus: Phosphoserine aminotransferase (359 aa).

L-glutamate contacts are provided by Ser-9 and Arg-42. Residues 76–77, Trp-102, Thr-152, Asp-171, and Gln-194 contribute to the pyridoxal 5'-phosphate site; that span reads AS. Lys-195 carries the post-translational modification N6-(pyridoxal phosphate)lysine. 236–237 contacts pyridoxal 5'-phosphate; the sequence is NT.

The protein belongs to the class-V pyridoxal-phosphate-dependent aminotransferase family. SerC subfamily. As to quaternary structure, homodimer. The cofactor is pyridoxal 5'-phosphate.

It localises to the cytoplasm. The catalysed reaction is O-phospho-L-serine + 2-oxoglutarate = 3-phosphooxypyruvate + L-glutamate. It carries out the reaction 4-(phosphooxy)-L-threonine + 2-oxoglutarate = (R)-3-hydroxy-2-oxo-4-phosphooxybutanoate + L-glutamate. The protein operates within amino-acid biosynthesis; L-serine biosynthesis; L-serine from 3-phospho-D-glycerate: step 2/3. It functions in the pathway cofactor biosynthesis; pyridoxine 5'-phosphate biosynthesis; pyridoxine 5'-phosphate from D-erythrose 4-phosphate: step 3/5. Catalyzes the reversible conversion of 3-phosphohydroxypyruvate to phosphoserine and of 3-hydroxy-2-oxo-4-phosphonooxybutanoate to phosphohydroxythreonine. This Marinomonas sp. (strain MWYL1) protein is Phosphoserine aminotransferase.